Consider the following 325-residue polypeptide: GTP 3',8-cyclase (325 aa).

Positions 10–229 (GYGRRINYLR…PSLEKIKSED (220 aa)) constitute a Radical SAM core domain. Residue Arg19 participates in GTP binding. Positions 26 and 30 each coordinate [4Fe-4S] cluster. Tyr32 lines the S-adenosyl-L-methionine pocket. A [4Fe-4S] cluster-binding site is contributed by Cys33. Arg69 lines the GTP pocket. Gly73 serves as a coordination point for S-adenosyl-L-methionine. A GTP-binding site is contributed by Thr100. Ser124 is an S-adenosyl-L-methionine binding site. A GTP-binding site is contributed by Lys161. Met195 is an S-adenosyl-L-methionine binding site. The [4Fe-4S] cluster site is built by Cys257 and Cys260. 262–264 (RLR) is a binding site for GTP. Cys274 contributes to the [4Fe-4S] cluster binding site.

This sequence belongs to the radical SAM superfamily. MoaA family. As to quaternary structure, monomer and homodimer. Requires [4Fe-4S] cluster as cofactor.

The catalysed reaction is GTP + AH2 + S-adenosyl-L-methionine = (8S)-3',8-cyclo-7,8-dihydroguanosine 5'-triphosphate + 5'-deoxyadenosine + L-methionine + A + H(+). It functions in the pathway cofactor biosynthesis; molybdopterin biosynthesis. In terms of biological role, catalyzes the cyclization of GTP to (8S)-3',8-cyclo-7,8-dihydroguanosine 5'-triphosphate. In Peptoclostridium acidaminophilum (Eubacterium acidaminophilum), this protein is GTP 3',8-cyclase.